The following is a 200-amino-acid chain: Endoribonuclease YbeY (200 aa).

A compositionally biased stretch (pro residues) spans 1 to 18; the sequence is MPADPALPDPVPPGPTAP. A disordered region spans residues 1 to 22; it reads MPADPALPDPVPPGPTAPVPTD. 3 residues coordinate Zn(2+): H151, H155, and H161.

It belongs to the endoribonuclease YbeY family. The cofactor is Zn(2+).

The protein localises to the cytoplasm. In terms of biological role, single strand-specific metallo-endoribonuclease involved in late-stage 70S ribosome quality control and in maturation of the 3' terminus of the 16S rRNA. This Rhodospirillum rubrum (strain ATCC 11170 / ATH 1.1.1 / DSM 467 / LMG 4362 / NCIMB 8255 / S1) protein is Endoribonuclease YbeY.